Consider the following 538-residue polypeptide: AAA ATPase forming ring-shaped complexes (538 aa).

The stretch at 14 to 54 (ARELRLANHRLGAQNEKLTEALKASREKLAEINSRLADMAE) forms a coiled coil. 240–245 (GNGKTL) serves as a coordination point for ATP.

Belongs to the AAA ATPase family. Homohexamer. Assembles into a hexameric ring structure.

In Corynebacterium urealyticum (strain ATCC 43042 / DSM 7109), this protein is AAA ATPase forming ring-shaped complexes.